Reading from the N-terminus, the 255-residue chain is U2 small nuclear ribonucleoprotein A' (255 aa).

LRR repeat units follow at residues 20–41, 43–64, 65–86, and 89–110; these read RDRELDLRGYKIPVIENLGATL, QFDAIDFSDNEIRKLDGFPLLR, RLKTLLVNNNRICRIGEGLDQA, and CLTELILTNNSLVELGDLDPLA. The 39-residue stretch at 123–161 folds into the LRRCT domain; sequence NPVTNKKHYRLYVIYKVPQVRVLDFQKVKLKERQEAEKM. Lys-172 is subject to N6-acetyllysine; alternate. Lys-172 participates in a covalent cross-link: Glycyl lysine isopeptide (Lys-Gly) (interchain with G-Cter in SUMO2); alternate. Ser-178 and Ser-197 each carry phosphoserine. A disordered region spans residues 179 to 199; sequence KTFNPGAGLPTDKKKGGPSAG. A Glycyl lysine isopeptide (Lys-Gly) (interchain with G-Cter in SUMO2) cross-link involves residue Lys-221. Residues 222 to 255 form a disordered region; sequence GLLQSGQIPGRERRSGPSDEGEEEIEDDTVTNGS. A phosphoserine mark is found at Ser-236 and Ser-255. Acidic residues predominate over residues 240-255; the sequence is DEGEEEIEDDTVTNGS.

This sequence belongs to the U2 small nuclear ribonucleoprotein A family. Identified in the spliceosome B complex. Identified in the spliceosome C complex. Found in a pre-mRNA splicing complex with SFRS4, SFRS5, SNRNP70, SNRPA1, SRRM1 and SRRM2. Found in a pre-mRNA exonic splicing enhancer (ESE) complex with SNRNP70, SNRPA1, SRRM1 and TRA2B. Contributes to the binding of stem loop IV of U2 snRNA with SNRPB2.

It localises to the nucleus. Its function is as follows. Involved in pre-mRNA splicing as component of the spliceosome. Associated with sn-RNP U2, where it contributes to the binding of stem loop IV of U2 snRNA. This chain is U2 small nuclear ribonucleoprotein A' (Snrpa1), found in Mus musculus (Mouse).